Consider the following 221-residue polypeptide: Tetraspanin-2 (221 aa).

Over 1–13 the chain is Cytoplasmic; the sequence is MGRFRGGLRCIKY. The helical transmembrane segment at 14–34 threads the bilayer; that stretch reads LLLGFNLLFWLAGSAVIAFGL. Topologically, residues 35–54 are extracellular; that stretch reads WFRFGGAIKELSSEDKSPEY. The helical transmembrane segment at 55-75 threads the bilayer; that stretch reads FYVGLYVLVGAGALMMAVGFF. The Cytoplasmic portion of the chain corresponds to 76–90; the sequence is GCCGAMRESQCVLGS. A helical membrane pass occupies residues 91 to 111; that stretch reads FFTCLLVIFAAEVTTGVFAFI. The Extracellular portion of the chain corresponds to 112 to 188; sequence GKGVAIRHVQ…ETIISVKLQL (77 aa). An N-linked (GlcNAc...) asparagine glycan is attached at N139. Residues 189-209 form a helical membrane-spanning segment; the sequence is IGIVGIGIAGLTIFGMIFSMV. The Cytoplasmic segment spans residues 210 to 221; sequence LCCAIRNSRDVI.

The protein belongs to the tetraspanin (TM4SF) family.

Its subcellular location is the membrane. In terms of biological role, may play a role in signalling in oligodendrocytes in the early stages of their terminal differentiation into myelin-forming glia and may also function in stabilizing the mature sheath. In Homo sapiens (Human), this protein is Tetraspanin-2 (TSPAN2).